A 122-amino-acid polypeptide reads, in one-letter code: Cytochrome c3 hydrogenase large chain (122 aa).

Requires Fe cation as cofactor.

It carries out the reaction 2 Fe(III)-[cytochrome c3] + H2 = 2 Fe(II)-[cytochrome c3] + 2 H(+). The polypeptide is Cytochrome c3 hydrogenase large chain (hoxG) (Acidithiobacillus ferrooxidans (Thiobacillus ferrooxidans)).